Here is a 229-residue protein sequence, read N- to C-terminus: Uracil-DNA glycosylase (229 aa).

D64 acts as the Proton acceptor in catalysis.

The protein belongs to the uracil-DNA glycosylase (UDG) superfamily. UNG family.

The protein localises to the cytoplasm. The enzyme catalyses Hydrolyzes single-stranded DNA or mismatched double-stranded DNA and polynucleotides, releasing free uracil.. Its function is as follows. Excises uracil residues from the DNA which can arise as a result of misincorporation of dUMP residues by DNA polymerase or due to deamination of cytosine. The chain is Uracil-DNA glycosylase from Geobacillus thermodenitrificans (strain NG80-2).